The sequence spans 294 residues: Acetylglutamate kinase (294 aa).

Residues 47–48, Arg69, and Asn168 contribute to the substrate site; that span reads GG.

The protein belongs to the acetylglutamate kinase family. ArgB subfamily.

It localises to the cytoplasm. The enzyme catalyses N-acetyl-L-glutamate + ATP = N-acetyl-L-glutamyl 5-phosphate + ADP. It participates in amino-acid biosynthesis; L-arginine biosynthesis; N(2)-acetyl-L-ornithine from L-glutamate: step 2/4. Functionally, catalyzes the ATP-dependent phosphorylation of N-acetyl-L-glutamate. The protein is Acetylglutamate kinase of Corynebacterium glutamicum (strain ATCC 13032 / DSM 20300 / JCM 1318 / BCRC 11384 / CCUG 27702 / LMG 3730 / NBRC 12168 / NCIMB 10025 / NRRL B-2784 / 534).